A 64-amino-acid polypeptide reads, in one-letter code: Large ribosomal subunit protein uL29 (64 aa).

The protein belongs to the universal ribosomal protein uL29 family.

The sequence is that of Large ribosomal subunit protein uL29 from Dichelobacter nodosus (strain VCS1703A).